The primary structure comprises 415 residues: Histidine--tRNA ligase (415 aa).

It belongs to the class-II aminoacyl-tRNA synthetase family. Homodimer.

Its subcellular location is the cytoplasm. The enzyme catalyses tRNA(His) + L-histidine + ATP = L-histidyl-tRNA(His) + AMP + diphosphate + H(+). This chain is Histidine--tRNA ligase, found in Clostridium botulinum (strain 657 / Type Ba4).